A 394-amino-acid chain; its full sequence is Flagellin B (394 aa).

Belongs to the bacterial flagellin family.

The protein localises to the secreted. It is found in the bacterial flagellum. Its function is as follows. Flagellin is the subunit protein which polymerizes to form the filaments of bacterial flagella. This Rhizobium meliloti (strain 1021) (Ensifer meliloti) protein is Flagellin B (flaB).